We begin with the raw amino-acid sequence, 269 residues long: Cytochrome c oxidase subunit 3 (269 aa).

Transmembrane regions (helical) follow at residues 46-66, 90-110, 138-160, 167-187, 207-227, and 247-267; these read NSYYLFFISLILVISSMAFWF, GVILFIVSEALFFLAIFWAFF, PLLNTVILLSSGATVTYAHHSLI, ALYGSIITILLAIIFTVFQGV, FGTGFHGFHVIIGTIFLAVAL, and ILYWHFVDVVWLFLYVSIYYW.

Belongs to the cytochrome c oxidase subunit 3 family. As to quaternary structure, component of the cytochrome c oxidase (complex IV, CIV), a multisubunit enzyme composed of a catalytic core of 3 subunits and several supernumerary subunits. The complex exists as a monomer or a dimer and forms supercomplexes (SCs) in the inner mitochondrial membrane with ubiquinol-cytochrome c oxidoreductase (cytochrome b-c1 complex, complex III, CIII).

The protein resides in the mitochondrion inner membrane. It catalyses the reaction 4 Fe(II)-[cytochrome c] + O2 + 8 H(+)(in) = 4 Fe(III)-[cytochrome c] + 2 H2O + 4 H(+)(out). In terms of biological role, component of the cytochrome c oxidase, the last enzyme in the mitochondrial electron transport chain which drives oxidative phosphorylation. The respiratory chain contains 3 multisubunit complexes succinate dehydrogenase (complex II, CII), ubiquinol-cytochrome c oxidoreductase (cytochrome b-c1 complex, complex III, CIII) and cytochrome c oxidase (complex IV, CIV), that cooperate to transfer electrons derived from NADH and succinate to molecular oxygen, creating an electrochemical gradient over the inner membrane that drives transmembrane transport and the ATP synthase. Cytochrome c oxidase is the component of the respiratory chain that catalyzes the reduction of oxygen to water. Electrons originating from reduced cytochrome c in the intermembrane space (IMS) are transferred via the dinuclear copper A center (CU(A)) of subunit 2 and heme A of subunit 1 to the active site in subunit 1, a binuclear center (BNC) formed by heme A3 and copper B (CU(B)). The BNC reduces molecular oxygen to 2 water molecules using 4 electrons from cytochrome c in the IMS and 4 protons from the mitochondrial matrix. The polypeptide is Cytochrome c oxidase subunit 3 (COIII) (Podospora anserina (strain S / ATCC MYA-4624 / DSM 980 / FGSC 10383) (Pleurage anserina)).